A 498-amino-acid chain; its full sequence is Ammonium transporter 1 member 1 (498 aa).

11 helical membrane-spanning segments follow: residues 39 to 59, 74 to 94, 120 to 140, 148 to 168, 192 to 212, 236 to 256, 274 to 296, 307 to 327, 331 to 351, 360 to 380, and 411 to 431; these read LLFSAYLVFAMQLGFAMLCAG, VLDAAAGALFYYLFGFAFAFG, FFLFQWAFAIAAAGITSGSIA, YLIYSAFLTGFVYPVVSHWIW, FAGSGVVHMVGGVAGLWGALI, LVVLGTFLLWFGWYGFNPGSF, SGVGRTAVTTTLAGSVAALTTLF, VVDVCNGLLGGFAAITAGCSV, WAAIICGFVSAWVLIGLNALA, LEAAQLHGGCGAWGILFTALF, and VIQILVIFGWVSCTMGPLFYG.

It belongs to the ammonia transporter channel (TC 1.A.11.2) family. Expressed in roots and shoots.

It is found in the membrane. Its function is as follows. Ammonium transporter probably involved in ammonium uptake from the soil. The polypeptide is Ammonium transporter 1 member 1 (AMT1-1) (Oryza sativa subsp. japonica (Rice)).